The primary structure comprises 608 residues: 1-deoxy-D-xylulose-5-phosphate synthase (608 aa).

Thiamine diphosphate-binding positions include histidine 66 and glycine 107–alanine 109. Aspartate 138 is a Mg(2+) binding site. Thiamine diphosphate-binding positions include glycine 139–alanine 140, asparagine 167, phenylalanine 277, and glutamate 350. Asparagine 167 contributes to the Mg(2+) binding site.

This sequence belongs to the transketolase family. DXPS subfamily. In terms of assembly, homodimer. The cofactor is Mg(2+). Requires thiamine diphosphate as cofactor.

It carries out the reaction D-glyceraldehyde 3-phosphate + pyruvate + H(+) = 1-deoxy-D-xylulose 5-phosphate + CO2. It participates in metabolic intermediate biosynthesis; 1-deoxy-D-xylulose 5-phosphate biosynthesis; 1-deoxy-D-xylulose 5-phosphate from D-glyceraldehyde 3-phosphate and pyruvate: step 1/1. Functionally, catalyzes the acyloin condensation reaction between C atoms 2 and 3 of pyruvate and glyceraldehyde 3-phosphate to yield 1-deoxy-D-xylulose-5-phosphate (DXP). The sequence is that of 1-deoxy-D-xylulose-5-phosphate synthase from Thermotoga sp. (strain RQ2).